The sequence spans 63 residues: Gallinacin-4 (63 aa).

An N-terminal signal peptide occupies residues 1–19 (MKILCFFIVLLFVAVHGAV). The propeptide occupies 20-25 (GFSRSP). 3 cysteine pairs are disulfide-bonded: cysteine 31/cysteine 59, cysteine 38/cysteine 53, and cysteine 43/cysteine 60.

Belongs to the beta-defensin family. As to expression, strong expression in the bone marrow and testis. Widely expressed. Weak expression in the ovarian stroma, but not expressed in the ovarian follicles.

It localises to the secreted. Its subcellular location is the cytoplasmic granule. Its function is as follows. Has bactericidal activity. Potent activity against S.typhimurium and S.entiriditis. The chain is Gallinacin-4 (GAL4) from Gallus gallus (Chicken).